The primary structure comprises 676 residues: DNA-directed RNA polymerase subunit beta' (676 aa).

Residues Cys-69, Cys-71, Cys-87, and Cys-90 each contribute to the Zn(2+) site. Asp-485, Asp-487, and Asp-489 together coordinate Mg(2+).

This sequence belongs to the RNA polymerase beta' chain family. RpoC1 subfamily. In terms of assembly, in plastids the minimal PEP RNA polymerase catalytic core is composed of four subunits: alpha, beta, beta', and beta''. When a (nuclear-encoded) sigma factor is associated with the core the holoenzyme is formed, which can initiate transcription. It depends on Mg(2+) as a cofactor. Zn(2+) is required as a cofactor.

The protein localises to the plastid. It localises to the chloroplast. It catalyses the reaction RNA(n) + a ribonucleoside 5'-triphosphate = RNA(n+1) + diphosphate. In terms of biological role, DNA-dependent RNA polymerase catalyzes the transcription of DNA into RNA using the four ribonucleoside triphosphates as substrates. The sequence is that of DNA-directed RNA polymerase subunit beta' from Fagopyrum esculentum subsp. ancestrale (Wild buckwheat).